A 38-amino-acid polypeptide reads, in one-letter code: Large ribosomal subunit protein bL36 (38 aa).

It belongs to the bacterial ribosomal protein bL36 family.

The sequence is that of Large ribosomal subunit protein bL36 from Enterococcus faecalis (strain ATCC 700802 / V583).